Consider the following 209-residue polypeptide: Homeobox protein ceh-2 (209 aa).

Over residues Met-1–Glu-14 the composition is skewed to basic and acidic residues. 2 disordered regions span residues Met-1–Lys-46 and His-181–Ser-209. The span at Lys-15–Glu-24 shows a compositional bias: acidic residues. The homeobox DNA-binding region spans Asn-126–Arg-185.

It belongs to the EMX homeobox family. In the anterior pharynx, expressed in the I3 interneuron, the NSM and M3 motor neuron pairs, the three m2 muscle cells and the three e2 epithelial cells (at protein level).

Its subcellular location is the nucleus. Its function is as follows. Required for activity of the M3 pharyngeal motor neuron. The protein is Homeobox protein ceh-2 of Caenorhabditis elegans.